Here is a 177-residue protein sequence, read N- to C-terminus: NADH-quinone oxidoreductase subunit B (177 aa).

[4Fe-4S] cluster contacts are provided by Cys-56, Cys-57, Cys-121, and Cys-151.

It belongs to the complex I 20 kDa subunit family. NDH-1 is composed of 14 different subunits. Subunits NuoB, C, D, E, F, and G constitute the peripheral sector of the complex. [4Fe-4S] cluster is required as a cofactor.

The protein localises to the cell inner membrane. The enzyme catalyses a quinone + NADH + 5 H(+)(in) = a quinol + NAD(+) + 4 H(+)(out). NDH-1 shuttles electrons from NADH, via FMN and iron-sulfur (Fe-S) centers, to quinones in the respiratory chain. Couples the redox reaction to proton translocation (for every two electrons transferred, four hydrogen ions are translocated across the cytoplasmic membrane), and thus conserves the redox energy in a proton gradient. The sequence is that of NADH-quinone oxidoreductase subunit B from Ruegeria pomeroyi (strain ATCC 700808 / DSM 15171 / DSS-3) (Silicibacter pomeroyi).